Here is a 349-residue protein sequence, read N- to C-terminus: Methionine import ATP-binding protein MetN (349 aa).

Residues Ile-5–Val-245 enclose the ABC transporter domain. Gly-37–Ser-44 is a binding site for ATP.

This sequence belongs to the ABC transporter superfamily. Methionine importer (TC 3.A.1.24) family. The complex is composed of two ATP-binding proteins (MetN), two transmembrane proteins (MetI) and a solute-binding protein (MetQ).

The protein localises to the cell membrane. It catalyses the reaction L-methionine(out) + ATP + H2O = L-methionine(in) + ADP + phosphate + H(+). The enzyme catalyses D-methionine(out) + ATP + H2O = D-methionine(in) + ADP + phosphate + H(+). In terms of biological role, part of the ABC transporter complex MetNIQ involved in methionine import. Responsible for energy coupling to the transport system. In Lactobacillus johnsonii (strain CNCM I-12250 / La1 / NCC 533), this protein is Methionine import ATP-binding protein MetN.